The primary structure comprises 229 residues: MDFESFTLLAATDDLGVEPAARVDADGLELRMDFADEPLAQLDAYDGDLPILVTNRPTWEGGEAADTAGRLDALETALEHDAVTAVDLELAALEGAGDHDAGRVADAARDRGASVVVSTHNFESTPDREAIVSRLERACAHGDVGKMASTAQSPDDVLAMLGATRELTAEGEQVATMCMGAAGRHSRAVAPVYGSRIGYAPVDPADATAPGQYDLATLRTLVGQLQSDA.

3-dehydroquinate contacts are provided by residues 29 to 31 and R56; that span reads ELR. H120 (proton donor/acceptor) is an active-site residue. K146 (schiff-base intermediate with substrate) is an active-site residue. R187, T208, and Q212 together coordinate 3-dehydroquinate.

It belongs to the type-I 3-dehydroquinase family. In terms of assembly, homodimer.

The catalysed reaction is 3-dehydroquinate = 3-dehydroshikimate + H2O. Its pathway is metabolic intermediate biosynthesis; chorismate biosynthesis; chorismate from D-erythrose 4-phosphate and phosphoenolpyruvate: step 3/7. Involved in the third step of the chorismate pathway, which leads to the biosynthesis of aromatic amino acids. Catalyzes the cis-dehydration of 3-dehydroquinate (DHQ) and introduces the first double bond of the aromatic ring to yield 3-dehydroshikimate. This chain is 3-dehydroquinate dehydratase, found in Haloarcula marismortui (strain ATCC 43049 / DSM 3752 / JCM 8966 / VKM B-1809) (Halobacterium marismortui).